The primary structure comprises 197 residues: MAERKASVERDTLETQIKASINLDGTGKARFNIGVPFLEHMLDQIARHGLIDLDIECKGDLHIDDHHTVEDVGITLGQAFAQAIGDKKGIRRYGHAYVPLDEALSRVVIDFSGRPGLQMHVPYTRATVGGFDVDLFQEFFQGFVNHALVSLHIDNLRGTNTHHQIETVFKAFGRALRMAVELDERMAGQMPSTKGVL.

This sequence belongs to the imidazoleglycerol-phosphate dehydratase family.

It is found in the cytoplasm. It carries out the reaction D-erythro-1-(imidazol-4-yl)glycerol 3-phosphate = 3-(imidazol-4-yl)-2-oxopropyl phosphate + H2O. Its pathway is amino-acid biosynthesis; L-histidine biosynthesis; L-histidine from 5-phospho-alpha-D-ribose 1-diphosphate: step 6/9. The chain is Imidazoleglycerol-phosphate dehydratase from Pseudomonas fluorescens (strain Pf0-1).